The sequence spans 64 residues: Large ribosomal subunit protein bL33 (64 aa).

The protein belongs to the bacterial ribosomal protein bL33 family.

This is Large ribosomal subunit protein bL33 from Prochlorococcus marinus (strain MIT 9313).